The primary structure comprises 118 residues: UPF0449 protein C19orf25 (118 aa).

Tyrosine 63 is subject to Phosphotyrosine. Positions 81-109 (NVLRQRCELLQRAGEDLEREVAQMKQAAL) form a coiled coil.

It belongs to the UPF0449 family.

In Homo sapiens (Human), this protein is UPF0449 protein C19orf25 (C19orf25).